The following is a 132-amino-acid chain: Fatty acid-binding protein type 2 (132 aa).

Alanine 2 carries the post-translational modification N-acetylalanine.

It belongs to the calycin superfamily. Fatty-acid binding protein (FABP) family.

The chain is Fatty acid-binding protein type 2 from Fasciola hepatica (Liver fluke).